Reading from the N-terminus, the 365-residue chain is Ribosomal RNA large subunit methyltransferase M (365 aa).

S-adenosyl-L-methionine contacts are provided by residues serine 187, 220-223 (CPGG), aspartate 239, aspartate 259, and aspartate 276. Residue lysine 305 is the Proton acceptor of the active site.

Belongs to the class I-like SAM-binding methyltransferase superfamily. RNA methyltransferase RlmE family. RlmM subfamily. In terms of assembly, monomer.

Its subcellular location is the cytoplasm. It carries out the reaction cytidine(2498) in 23S rRNA + S-adenosyl-L-methionine = 2'-O-methylcytidine(2498) in 23S rRNA + S-adenosyl-L-homocysteine + H(+). Functionally, catalyzes the 2'-O-methylation at nucleotide C2498 in 23S rRNA. In Psychromonas ingrahamii (strain DSM 17664 / CCUG 51855 / 37), this protein is Ribosomal RNA large subunit methyltransferase M.